Reading from the N-terminus, the 568-residue chain is MRGIMAPKDIMTNTHAKSILNSMNSLRKSNTLCDVTLRVEQKDFPAHRIVLAACSDYFCAMFTSELSEKGKPYVDIQGLTASTMEILLDFVYTETVHVTVENVQELLPAACLLQLKGVKQACCEFLESQLDPSNCLGIRDFAETHNCVDLMQAAEVFSQKHFPEVVQHEEFILLSQGEVEKLIKCDEIQVDSEEPVFEAVISWVKHAKKEREGSLPDLLQYVRMPLLTPRYITDVIDTEPFIRCSLQCRDLVDEAKKFHLRPELRTQMQGPRTRAHIRANEVLLVVGGFGSQQSPIDVVEKYDPKTQEWSFLPSITRKRRYVASVSLHDRIYVIGGYDGRSRLSSVECLDYTADEDGVWYSVAPMNVRRGLAGATTLGDMIYVSGGFDGSRRHTSMERYDPNIDQWSMLGDMQTAREGAGLVVASGVIYCLGGYDGLNILNSVEKYDPHTGHWANVTPMATKRSGAGVALLNDHIYVVGGFDGTAHLSSVEAYNIRTDSWTTVTSMTTPRCYVGATVLRGRLYAIAGYDGNSSLSSIECYDPIIDSYGLVTSMGTQRCDAGVCALREK.

The 68-residue stretch at 33-100 (CDVTLRVEQK…VYTETVHVTV (68 aa)) folds into the BTB domain. One can recognise a BACK domain in the interval 135 to 236 (CLGIRDFAET…LTPRYITDVI (102 aa)). 6 Kelch repeats span residues 282-329 (VLLV…SLHD), 331-379 (IYVI…TLGD), 380-426 (MIYV…VASG), 427-473 (VIYC…LLND), 474-520 (HIYV…VLRG), and 522-567 (LYAI…ALRE).

Component of the BCR(KLHL12) E3 ubiquitin ligase complex, at least composed of CUL3 and KLHL12 and RBX1. This complex interacts with DVL3 upon activation of the Wnt signaling pathway by WNT3A. Interacts with DRD4, KLHL2 and SEC31A. Interacts with PEF1 and PDCD6/ALG-2; interaction takes place in response to cytosolic calcium increase and leads to bridge together the BCR(KLHL12) complex and SEC31 (SEC31A or SEC31B). In terms of processing, ubiquitinated by the SCF(FBXL17) complex, leading to its degradation by the proteasome: ubiquitination by the SCF(FBXL17) complex takes place when aberrant BTB domain dimers are formed.

It is found in the cytoplasmic vesicle. Its subcellular location is the COPII-coated vesicle. Its pathway is protein modification; protein ubiquitination. In terms of biological role, substrate-specific adapter of a BCR (BTB-CUL3-RBX1) E3 ubiquitin ligase complex that acts as a negative regulator of Wnt signaling pathway and ER-Golgi transport. The BCR(KLHL12) complex is involved in ER-Golgi transport by regulating the size of COPII coats, thereby playing a key role in collagen export, which is required for embryonic stem (ES) cells division: BCR(KLHL12) acts by mediating monoubiquitination of SEC31 (SEC31A or SEC31B). The BCR(KLHL12) complex is also involved in neural crest specification: in response to cytosolic calcium increase, interacts with the heterodimer formed with PEF1 and PDCD6/ALG-2, leading to bridge together the BCR(KLHL12) complex and SEC31 (SEC31A or SEC31B), promoting monoubiquitination of SEC31 and subsequent collagen export. As part of the BCR(KLHL12) complex, also acts as a negative regulator of the Wnt signaling pathway by mediating ubiquitination and subsequent proteolysis of DVL3. The BCR(KLHL12) complex also mediates polyubiquitination of DRD4 and PEF1, without leading to degradation of these proteins. In Bos taurus (Bovine), this protein is Kelch-like protein 12 (KLHL12).